We begin with the raw amino-acid sequence, 186 residues long: uncharacterized protein (186 aa).

Disordered regions lie at residues L17–F47, E77–A105, and Q121–G164. The segment covering P90–A105 has biased composition (low complexity). Acidic residues predominate over residues P136 to E149.

This is an uncharacterized protein from Homo sapiens (Human).